A 381-amino-acid chain; its full sequence is Alkanesulfonate monooxygenase (381 aa).

This sequence belongs to the SsuD family. In terms of assembly, homotetramer.

The enzyme catalyses an alkanesulfonate + FMNH2 + O2 = an aldehyde + FMN + sulfite + H2O + 2 H(+). Functionally, catalyzes the desulfonation of aliphatic sulfonates. This Escherichia coli O81 (strain ED1a) protein is Alkanesulfonate monooxygenase.